Here is a 117-residue protein sequence, read N- to C-terminus: NADH-ubiquinone oxidoreductase chain 3 (117 aa).

Transmembrane regions (helical) follow at residues Ile-4–Ile-24, Phe-57–Leu-77, and Trp-88–Trp-108.

Belongs to the complex I subunit 3 family.

It localises to the mitochondrion membrane. It catalyses the reaction a ubiquinone + NADH + 5 H(+)(in) = a ubiquinol + NAD(+) + 4 H(+)(out). Core subunit of the mitochondrial membrane respiratory chain NADH dehydrogenase (Complex I) that is believed to belong to the minimal assembly required for catalysis. Complex I functions in the transfer of electrons from NADH to the respiratory chain. The immediate electron acceptor for the enzyme is believed to be ubiquinone. The polypeptide is NADH-ubiquinone oxidoreductase chain 3 (ND3) (Heterololigo bleekeri (Spear squid)).